Consider the following 484-residue polypeptide: tRNA sulfurtransferase (484 aa).

The region spanning 63 to 167 (KEMGERLTCM…DKRLFVIHSQ (105 aa)) is the THUMP domain. ATP-binding positions include 185 to 186 (LM), lysine 267, glycine 289, and glutamine 298. A disulfide bridge connects residues cysteine 346 and cysteine 457. Residues 405-483 (ALAGQIVIDI…GHANVRVYRP (79 aa)) form the Rhodanese domain. Catalysis depends on cysteine 457, which acts as the Cysteine persulfide intermediate.

The protein belongs to the ThiI family.

The protein localises to the cytoplasm. It catalyses the reaction [ThiI sulfur-carrier protein]-S-sulfanyl-L-cysteine + a uridine in tRNA + 2 reduced [2Fe-2S]-[ferredoxin] + ATP + H(+) = [ThiI sulfur-carrier protein]-L-cysteine + a 4-thiouridine in tRNA + 2 oxidized [2Fe-2S]-[ferredoxin] + AMP + diphosphate. The enzyme catalyses [ThiS sulfur-carrier protein]-C-terminal Gly-Gly-AMP + S-sulfanyl-L-cysteinyl-[cysteine desulfurase] + AH2 = [ThiS sulfur-carrier protein]-C-terminal-Gly-aminoethanethioate + L-cysteinyl-[cysteine desulfurase] + A + AMP + 2 H(+). It functions in the pathway cofactor biosynthesis; thiamine diphosphate biosynthesis. Functionally, catalyzes the ATP-dependent transfer of a sulfur to tRNA to produce 4-thiouridine in position 8 of tRNAs, which functions as a near-UV photosensor. Also catalyzes the transfer of sulfur to the sulfur carrier protein ThiS, forming ThiS-thiocarboxylate. This is a step in the synthesis of thiazole, in the thiamine biosynthesis pathway. The sulfur is donated as persulfide by IscS. The chain is tRNA sulfurtransferase from Pseudomonas fluorescens (strain Pf0-1).